We begin with the raw amino-acid sequence, 237 residues long: Demethylmenaquinone methyltransferase (237 aa).

S-adenosyl-L-methionine is bound by residues threonine 58, aspartate 79, and 106 to 107; that span reads NA.

Belongs to the class I-like SAM-binding methyltransferase superfamily. MenG/UbiE family.

It carries out the reaction a 2-demethylmenaquinol + S-adenosyl-L-methionine = a menaquinol + S-adenosyl-L-homocysteine + H(+). The protein operates within quinol/quinone metabolism; menaquinone biosynthesis; menaquinol from 1,4-dihydroxy-2-naphthoate: step 2/2. Methyltransferase required for the conversion of demethylmenaquinol (DMKH2) to menaquinol (MKH2). The polypeptide is Demethylmenaquinone methyltransferase (Listeria monocytogenes serotype 4a (strain HCC23)).